Reading from the N-terminus, the 446-residue chain is Adenylosuccinate synthetase (446 aa).

GTP-binding positions include 12-18 and 40-42; these read GDEGKGK and GHT. Asp-13 functions as the Proton acceptor in the catalytic mechanism. The Mg(2+) site is built by Asp-13 and Gly-40. Residues 13–16, 38–41, Thr-128, Arg-142, Gln-223, Thr-238, and Arg-302 contribute to the IMP site; these read DEGK and NAGH. Residue His-41 is the Proton donor of the active site. Position 298–304 (298–304) interacts with substrate; the sequence is TTTGRRR. Residues Arg-304, 330 to 332, and 412 to 414 each bind GTP; these read KLD and SLG.

This sequence belongs to the adenylosuccinate synthetase family. In terms of assembly, homodimer. It depends on Mg(2+) as a cofactor.

It localises to the cytoplasm. It carries out the reaction IMP + L-aspartate + GTP = N(6)-(1,2-dicarboxyethyl)-AMP + GDP + phosphate + 2 H(+). Its pathway is purine metabolism; AMP biosynthesis via de novo pathway; AMP from IMP: step 1/2. Its function is as follows. Plays an important role in the de novo pathway of purine nucleotide biosynthesis. Catalyzes the first committed step in the biosynthesis of AMP from IMP. The sequence is that of Adenylosuccinate synthetase from Crocosphaera subtropica (strain ATCC 51142 / BH68) (Cyanothece sp. (strain ATCC 51142)).